The primary structure comprises 47 residues: MVRLLAKLLRSTIHGSNGVSLDAVSSTHGTPGFQTPDARVISRFGFN.

A propeptide spanning residues 1-28 (MVRLLAKLLRSTIHGSNGVSLDAVSSTH) is cleaved from the precursor. Residues 29–37 (GTPGFQTPD) constitute a cross-link (isoaspartyl glycine isopeptide (Gly-Asp)).

In terms of processing, it is assumed that the two processing enzymes CapB/CapC convert the precursor protein CapA into the mature lasso peptide capistruin. CapB is assumed to cleave the precursor protein CapA and to set an N-terminal Gly free, whose a-NH2 group acts as the nucleophile in the subsequent cyclization reaction. CapC is most likely involved in the side-chain carboxyl group activation of aspartic acid at position 9 generating the electrophile for the condensation reaction. CapD may export capistruin outside of the producing cells.

It localises to the secreted. Functionally, peptide antibiotic that functions through inhibition of the bacterial DNA-dependent RNA polymerase (RNAP). Inhibits transcription by binding in RNAP secondary channel, where it sterically blocks the folding of the trigger loop, which is essential for efficient catalysis. In contrast to MccJ25, does not restrict access of nucleotide substrates to the catalytic center and shows a non-competitive mode of inhibition. Shows activity against closely related Gram-negative Burkholderia and Pseudomonas strains. Is not active against Gram-positive bacteria. This chain is Capistruin, found in Burkholderia thailandensis (strain ATCC 700388 / DSM 13276 / CCUG 48851 / CIP 106301 / E264).